The sequence spans 838 residues: Valine--tRNA ligase (838 aa).

Positions proline 46–histidine 56 match the 'HIGH' region motif. The 'KMSKS' region motif lies at lysine 514 to serine 518. Lysine 517 serves as a coordination point for ATP. Residues valine 768–glutamate 838 adopt a coiled-coil conformation.

Belongs to the class-I aminoacyl-tRNA synthetase family. ValS type 1 subfamily. In terms of assembly, monomer.

It localises to the cytoplasm. It catalyses the reaction tRNA(Val) + L-valine + ATP = L-valyl-tRNA(Val) + AMP + diphosphate. Its function is as follows. Catalyzes the attachment of valine to tRNA(Val). As ValRS can inadvertently accommodate and process structurally similar amino acids such as threonine, to avoid such errors, it has a 'posttransfer' editing activity that hydrolyzes mischarged Thr-tRNA(Val) in a tRNA-dependent manner. The chain is Valine--tRNA ligase from Mycoplasma pneumoniae (strain ATCC 29342 / M129 / Subtype 1) (Mycoplasmoides pneumoniae).